Here is a 282-residue protein sequence, read N- to C-terminus: Complement component 1 Q subcomponent-binding protein, mitochondrial (282 aa).

Residues 1 to 73 (MLPLLRCVPR…PCACGCGCGS (73 aa)) constitute a mitochondrion transit peptide. The interval 76–93 (TDGDKAFVDFLSDEIKEE) is C1q binding. Serine 87 bears the Phosphoserine mark. The residue at position 91 (lysine 91) is an N6-acetyllysine. Positions 138–164 (SIPPTFDGEEEPSQGQKVEEQEPELTS) are disordered. The interval 168-213 (FVVEVIKNDDGKKALVLDCHYPEDEVGQEDEAESDIFSIREVSFQS) is interaction with MAVS. Tyrosine 188 carries the phosphotyrosine modification. 2 positions are modified to phosphoserine: serine 201 and serine 205. Position 214 is a phosphothreonine (threonine 214).

This sequence belongs to the MAM33 family. Homotrimer; three monomers form a donut-shaped structure with an unusually asymmetric charge distribution on the surface. Interacts with CDK13, HRK, VTN, NFYB, ADRA1B, FOXC1, DDX21, DDX50, NCL, SRSF1, SRSF9 and CDKN2A isoform smARF. Interacts with CD93; the association may represent a cell surface C1q receptor. Interacts with KRT1; the association represents a cell surface kininogen receptor. Interacts with CD209; the interaction is indicative for a C1q:C1QBP:CD209 signaling complex. Interacts with FBL and RRP1; the respective interactions with C1QBP are competitive. Probably associates with the mitoribosome. Interacts with MAVS; the interaction occurs upon viral transfection. Interacts with PPIF. Interacts with U2AF1L4. Interacts with PLEKHN1. Interacts with VGF-derived peptide TLQP-21. Interacts with POLGARF which is produced from an alternative reading frame of the POLG gene; the interaction results in nucleolar localization of C1QBP, probably due to prevention of C1QBP maturation and redirection from mitochondria to nucleoli. Interacts with MRE11 and RAD50; forming the MRC (MRE11-RAD50-C1QBP) complex that inhibits the activity of MRE11. In terms of assembly, (Microbial infection) Interacts with Rubella virus capsid protein; the interaction occurs in mitochondria. Interacts with Rubella virus protease/methyltransferase p150. As to quaternary structure, (Microbial infection) Interacts with Staphylococcus aureus protein A/spa. (Microbial infection) Interacts with Staphylococcus aureus protein A/spa, HIV-1 Tat and HCV core protein. In terms of assembly, (Microbial infection) Interacts with HIV-1 Tat and HCV core protein. As to quaternary structure, (Microbial infection) Interacts with L.monocytogenes internalin B. (Microbial infection) Interacts with Epstein-Barr virus EBNA1. Expressed on cell surface of peripheral blood cells (at protein level); Surface expression is reported for macrophages and monocyte-derived dendritic cells.

The protein resides in the mitochondrion matrix. It localises to the nucleus. It is found in the nucleolus. Its subcellular location is the cell membrane. The protein localises to the secreted. The protein resides in the cytoplasm. Its function is as follows. Multifunctional and multicompartmental protein involved in inflammation and infection processes, ribosome biogenesis, protein synthesis in mitochondria, regulation of apoptosis, transcriptional regulation and pre-mRNA splicing. At the cell surface is thought to act as an endothelial receptor for plasma proteins of the complement and kallikrein-kinin cascades. Putative receptor for C1q; specifically binds to the globular 'heads' of C1q thus inhibiting C1; may perform the receptor function through a complex with C1qR/CD93. In complex with cytokeratin-1/KRT1 is a high affinity receptor for kininogen-1/HMWK. Can also bind other plasma proteins, such as coagulation factor XII leading to its autoactivation. May function to bind initially fluid kininogen-1 to the cell membrane. The secreted form may enhance both extrinsic and intrinsic coagulation pathways. It is postulated that the cell surface form requires docking with transmembrane proteins for downstream signaling which might be specific for a cell-type or response. By acting as C1q receptor is involved in chemotaxis of immature dendritic cells and neutrophils and is proposed to signal through CD209/DC-SIGN on immature dendritic cells, through integrin alpha-4/beta-1 during trophoblast invasion of the decidua, and through integrin beta-1 during endothelial cell adhesion and spreading. Signaling involved in inhibition of innate immune response is implicating the PI3K-AKT/PKB pathway. Required for protein synthesis in mitochondria. In mitochondrial translation may be involved in formation of functional 55S mitoribosomes; the function seems to involve its RNA-binding activity. Acts as a RNA modification reader, which specifically recognizes and binds mitochondrial RNAs modified by C5-methylcytosine (m5C) in response to stress, and promotes recruitment of the mitochondrial degradosome complex, leading to their degradation. May be involved in the nucleolar ribosome maturation process; the function may involve the exchange of FBL for RRP1 in the association with pre-ribosome particles. Involved in regulation of RNA splicing by inhibiting the RNA-binding capacity of SRSF1 and its phosphorylation. Is required for the nuclear translocation of splicing factor U2AF1L4. Involved in regulation of CDKN2A- and HRK-mediated apoptosis. Stabilizes mitochondrial CDKN2A isoform smARF. May be involved in regulation of FOXC1 transcriptional activity and NFY/CCAAT-binding factor complex-mediated transcription. May play a role in antibacterial defense as it can bind to cell surface hyaluronan and inhibit Streptococcus pneumoniae hyaluronate lyase. May be involved in modulation of the immune response; ligation by HCV core protein is resulting in suppression of interleukin-12 production in monocyte-derived dendritic cells. Involved in regulation of antiviral response by inhibiting RIGI- and IFIH1-mediated signaling pathways probably involving its association with MAVS after viral infection. Acts as a regulator of DNA repair via homologous recombination by inhibiting the activity of MRE11: interacts with unphosphorylated MRE11 and RAD50 in absence of DNA damage, preventing formation and activity of the MRN complex. Following DNA damage, dissociates from phosphorylated MRE11, allowing formation of the MRN complex. Functionally, (Microbial infection) Involved in HIV-1 replication, presumably by contributing to splicing of viral RNA. In terms of biological role, (Microbial infection) In infection processes acts as an attachment site for microbial proteins, including Listeria monocytogenes internalin B (InlB) and Staphylococcus aureus protein A. (Microbial infection) Involved in replication of Rubella virus. This chain is Complement component 1 Q subcomponent-binding protein, mitochondrial (C1QBP), found in Homo sapiens (Human).